The sequence spans 133 residues: Small ribosomal subunit protein uS11 (133 aa).

Belongs to the universal ribosomal protein uS11 family. As to quaternary structure, part of the 30S ribosomal subunit.

Functionally, located on the platform of the 30S subunit. In Hyperthermus butylicus (strain DSM 5456 / JCM 9403 / PLM1-5), this protein is Small ribosomal subunit protein uS11.